A 328-amino-acid polypeptide reads, in one-letter code: Phosphoserine phosphatase (328 aa).

The Nucleophile role is filled by D113. The Mg(2+) site is built by D113 and D115. The Proton donor role is filled by D115. Residues E122, R158, 201–202 (SG), and K246 each bind substrate. D269 lines the Mg(2+) pocket. N272 serves as a coordination point for substrate.

It belongs to the HAD-like hydrolase superfamily. SerB family. Mg(2+) serves as cofactor.

It catalyses the reaction O-phospho-L-serine + H2O = L-serine + phosphate. The catalysed reaction is O-phospho-D-serine + H2O = D-serine + phosphate. The protein operates within amino-acid biosynthesis; L-serine biosynthesis; L-serine from 3-phospho-D-glycerate: step 3/3. In Vibrio cholerae serotype O1 (strain ATCC 39315 / El Tor Inaba N16961), this protein is Phosphoserine phosphatase.